Consider the following 553-residue polypeptide: uncharacterized protein (553 aa).

Positions 1–28 (MRYARHASRYSLFTLAVSAALLPGAGWA) are cleaved as a signal peptide.

This is an uncharacterized protein from Pseudomonas aeruginosa (strain ATCC 15692 / DSM 22644 / CIP 104116 / JCM 14847 / LMG 12228 / 1C / PRS 101 / PAO1).